The chain runs to 70 residues: Large ribosomal subunit protein bL31 (70 aa).

Zn(2+) contacts are provided by C16, C18, C37, and C40.

This sequence belongs to the bacterial ribosomal protein bL31 family. Type A subfamily. As to quaternary structure, part of the 50S ribosomal subunit. It depends on Zn(2+) as a cofactor.

Binds the 23S rRNA. The protein is Large ribosomal subunit protein bL31 of Cronobacter sakazakii (strain ATCC BAA-894) (Enterobacter sakazakii).